The chain runs to 376 residues: GDSL esterase/lipase At5g55050 (376 aa).

An N-terminal signal peptide occupies residues Met-1–Ala-29. Residue Ser-46 is the Nucleophile of the active site. N-linked (GlcNAc...) asparagine glycosylation is found at Asn-134 and Asn-245. Active-site residues include Asp-340 and His-344.

This sequence belongs to the 'GDSL' lipolytic enzyme family.

The protein resides in the secreted. In Arabidopsis thaliana (Mouse-ear cress), this protein is GDSL esterase/lipase At5g55050.